Here is a 288-residue protein sequence, read N- to C-terminus: Pyruvate synthase subunit PorB (288 aa).

Cysteine 16, cysteine 19, and cysteine 44 together coordinate [4Fe-4S] cluster. A compositionally biased stretch (polar residues) spans 137–148 (STPYGASTTTSP). A disordered region spans residues 137-159 (STPYGASTTTSPHGKESFGEDRP). Positions 149-159 (HGKESFGEDRP) are enriched in basic and acidic residues. Cysteine 208 lines the [4Fe-4S] cluster pocket.

In terms of assembly, heterotetramer of one alpha, one beta, one delta and one gamma chain. It depends on [4Fe-4S] cluster as a cofactor.

It catalyses the reaction 2 oxidized [2Fe-2S]-[ferredoxin] + pyruvate + CoA = 2 reduced [2Fe-2S]-[ferredoxin] + acetyl-CoA + CO2 + H(+). The protein is Pyruvate synthase subunit PorB (porB) of Methanothermobacter thermautotrophicus (strain ATCC 29096 / DSM 1053 / JCM 10044 / NBRC 100330 / Delta H) (Methanobacterium thermoautotrophicum).